A 339-amino-acid polypeptide reads, in one-letter code: Transcription initiation factor IIB (339 aa).

The TFIIB-type zinc-finger motif lies at 39–70 (EELICPVCGSKNIIKDYERAEIVCEMCGCVLQ). Residues Cys43, Cys46, Cys62, and Cys65 each coordinate Zn(2+). Tandem repeats lie at residues 156–239 (SELD…SREL) and 250–331 (DYVP…ELTE).

This sequence belongs to the TFIIB family.

Functionally, stabilizes TBP binding to an archaeal box-A promoter. Also responsible for recruiting RNA polymerase II to the pre-initiation complex (DNA-TBP-TFIIB). In Methanococcus maripaludis (strain C7 / ATCC BAA-1331), this protein is Transcription initiation factor IIB.